Here is a 187-residue protein sequence, read N- to C-terminus: Structural protein ORF187 (187 aa).

Residues 65-85 (IYQPTAIAVSGVGGIIGALLA) form a helical membrane-spanning segment.

Its subcellular location is the host membrane. It is found in the virion. The sequence is that of Structural protein ORF187 from Acidianus two-tailed virus (ATV).